Consider the following 237-residue polypeptide: Ankyrin repeat protein 14 (237 aa).

2 ANK repeats span residues 27-56 and 60-90; these read RGET…DVNI and NGYT…TLDC.

May be involved in virus-host protein interaction through the ankyrin repeats. The protein is Ankyrin repeat protein 14 of Vaccinia virus (strain Western Reserve) (VACV).